Consider the following 209-residue polypeptide: Small ribosomal subunit protein uS4 (209 aa).

The 66-residue stretch at 99–164 (GRLDSVVYRM…QLRVKAALEA (66 aa)) folds into the S4 RNA-binding domain.

This sequence belongs to the universal ribosomal protein uS4 family. Part of the 30S ribosomal subunit. Contacts protein S5. The interaction surface between S4 and S5 is involved in control of translational fidelity.

Its function is as follows. One of the primary rRNA binding proteins, it binds directly to 16S rRNA where it nucleates assembly of the body of the 30S subunit. Functionally, with S5 and S12 plays an important role in translational accuracy. The protein is Small ribosomal subunit protein uS4 of Aromatoleum aromaticum (strain DSM 19018 / LMG 30748 / EbN1) (Azoarcus sp. (strain EbN1)).